The primary structure comprises 669 residues: Protein fem-1 homolog A (669 aa).

ANK repeat units lie at residues 2–31 (DLRT…REEL), 40–70 (GGGT…SVEA), 82–111 (EGAP…SVNR), 115–145 (TNST…DLEV), 149–178 (HGHT…QVNR), 182–211 (KGNT…RMER), and 214–243 (YGMT…GQEQ). The residue at position 108 (Ser108) is a Phosphoserine. The tract at residues 240–278 (GQEQVAGGEAQPGLPQEDPSTSQGCAQPQGAPCCSSSPE) is disordered. 2 TPR repeats span residues 298–332 (VEAL…RHQG) and 390–423 (SYYI…QQSN). ANK repeat units lie at residues 534–576 (NGFT…DPDS) and 580–609 (DNNT…HMDA).

It belongs to the fem-1 family. Component of a CRL2 E3 ubiquitin-protein ligase complex, also named ECS (Elongin BC-CUL2/5-SOCS-box protein) complex, composed of CUL2, Elongin BC (ELOB and ELOC), RBX1 and substrate-specific adapter FEM1A. Interacts with PTGER4. Interacts with NFKB1; the interaction is direct. In terms of processing, phosphorylated; highly phosphorylated in myoblasts and myotubes. Phosphorylation at Ser-108 promotes PGE2-EP4-mediated inhibition of inflammation. Dephosphorylated by protein phosphatase 2A (PP2A). Present in macrophages derived from peripheral blood monocytes. Also present in atheromata (at protein level).

The protein localises to the mitochondrion. It is found in the cytoplasm. It participates in protein modification; protein ubiquitination. Its function is as follows. Substrate-recognition component of a Cul2-RING (CRL2) E3 ubiquitin-protein ligase complex of the DesCEND (destruction via C-end degrons) pathway, which recognizes a C-degron located at the extreme C terminus of target proteins, leading to their ubiquitination and degradation. The C-degron recognized by the DesCEND pathway is usually a motif of less than ten residues and can be present in full-length proteins, truncated proteins or proteolytically cleaved forms. The CRL2(FEM1A) complex specifically recognizes proteins with an arginine at the C-terminus: recognizes and binds proteins ending with -Lys/Arg-Xaa-Arg and -Lys/Arg-Xaa-Xaa-Arg C-degrons, such as SIL1 or OR51B2, leading to their ubiquitination and degradation. Promotes ubiquitination and degradation of SLBP. Involved in PGE2-EP4-mediated inhibition of inflammation of macrophages via interaction with NFKB1 and PTGER4. Promotes inflammation in brain microglia through MAP2K4/MKK4-mediated signaling. The protein is Protein fem-1 homolog A of Homo sapiens (Human).